The sequence spans 734 residues: E3 ubiquitin-protein ligase TRIM56 (734 aa).

The segment at 21-60 (CKICLEQLHTPKTLPCLHTYCQDCLAQLDIGGQVRCPECR) adopts an RING-type zinc-finger fold. 2 consecutive B box-type zinc fingers follow at residues 98-149 (KPTC…VVDL) and 164-205 (RQAS…CLPL). Cys169, His172, Cys192, and His197 together coordinate Zn(2+). A coiled-coil region spans residues 215–303 (GLEELLAGVD…KIERQEQVAK (89 aa)). The span at 372-381 (EPKQSPKDSG) shows a compositional bias: basic and acidic residues. Residues 372–463 (EPKQSPKDSG…SPILRPNLEG (92 aa)) form a disordered region. Residues 435–448 (RPNKKKKCKGRGKS) show a composition bias toward basic residues. At Ser454 the chain carries Phosphoserine.

It belongs to the TRIM/RBCC family. As to quaternary structure, interacts with STING1. Interacts with TICAM1.

Its subcellular location is the cytoplasm. It carries out the reaction S-ubiquitinyl-[E2 ubiquitin-conjugating enzyme]-L-cysteine + [acceptor protein]-L-lysine = [E2 ubiquitin-conjugating enzyme]-L-cysteine + N(6)-ubiquitinyl-[acceptor protein]-L-lysine.. It participates in protein modification; protein ubiquitination. In terms of biological role, E3 ubiquitin-protein ligase that plays a key role in innate antiviral immunity by mediating ubiquitination of CGAS and STING1. In response to pathogen- and host-derived double-stranded DNA (dsDNA), targets STING1 to 'Lys-63'-linked ubiquitination, thereby promoting its homodimerization, a step required for the production of type I interferon IFN-beta. Also mediates monoubiquitination of CGAS, thereby promoting CGAS oligomerization and subsequent activation. Independently of its E3 ubiquitin ligase activity, positive regulator of TLR3 signaling. Potentiates extracellular double stranded RNA (dsRNA)-induced expression of IFNB1 and interferon-stimulated genes ISG15, IFIT1/ISG56, CXCL10, OASL and CCL5/RANTES. The sequence is that of E3 ubiquitin-protein ligase TRIM56 from Mus musculus (Mouse).